The chain runs to 87 residues: Small ribosomal subunit protein uS15 (87 aa).

The protein belongs to the universal ribosomal protein uS15 family. Part of the 30S ribosomal subunit. Forms a bridge to the 50S subunit in the 70S ribosome, contacting the 23S rRNA.

Functionally, one of the primary rRNA binding proteins, it binds directly to 16S rRNA where it helps nucleate assembly of the platform of the 30S subunit by binding and bridging several RNA helices of the 16S rRNA. Forms an intersubunit bridge (bridge B4) with the 23S rRNA of the 50S subunit in the ribosome. The sequence is that of Small ribosomal subunit protein uS15 from Clostridium beijerinckii (strain ATCC 51743 / NCIMB 8052) (Clostridium acetobutylicum).